The primary structure comprises 558 residues: Deleted in azoospermia protein 2 (558 aa).

Positions 1–10 are enriched in polar residues; it reads MSAANPETPN. The interval 1–27 is disordered; it reads MSAANPETPNSTISREASTQSSSAAAS. A compositionally biased stretch (low complexity) spans 11 to 27; it reads STISREASTQSSSAAAS. Residues 40-115 enclose the RRM domain; it reads NTVFVGGIDA…KKLKLGPAIR (76 aa). DAZ domains are found at residues 167-190, 191-214, 215-238, 239-262, 263-286, 287-310, 311-334, 335-358, 359-382, 383-406, 407-430, 431-454, 455-478, 479-502, and 503-526; these read AYSA…YNYQ, EYPT…YNYQ, PFPA…YNYQ, and AFPA…YNYQ.

Belongs to the RRM DAZ family. In terms of assembly, forms a heterodimer with BOLL and DAZL. Interacts with PUM2, DAZAP1, DAZAP2, DZIP1 and DZIP3. Testis specific.

Its subcellular location is the cytoplasm. It localises to the nucleus. Functionally, RNA-binding protein that plays an essential role in spermatogenesis. May act by binding to the 3'-UTR of mRNAs and regulating their translation. The polypeptide is Deleted in azoospermia protein 2 (DAZ2) (Homo sapiens (Human)).